Consider the following 108-residue polypeptide: UPF0235 protein MM_0822 (108 aa).

It belongs to the UPF0235 family.

In Methanosarcina mazei (strain ATCC BAA-159 / DSM 3647 / Goe1 / Go1 / JCM 11833 / OCM 88) (Methanosarcina frisia), this protein is UPF0235 protein MM_0822.